The sequence spans 447 residues: N-succinylarginine dihydrolase (447 aa).

Residues 19–28, Asn110, and 137–138 each bind substrate; these read AGLSFGNEAS and HR. Glu174 is an active-site residue. Position 212 (Arg212) interacts with substrate. The active site involves His248. The substrate site is built by Asp250 and Asn359. Cys365 acts as the Nucleophile in catalysis.

It belongs to the succinylarginine dihydrolase family. In terms of assembly, homodimer.

It catalyses the reaction N(2)-succinyl-L-arginine + 2 H2O + 2 H(+) = N(2)-succinyl-L-ornithine + 2 NH4(+) + CO2. The protein operates within amino-acid degradation; L-arginine degradation via AST pathway; L-glutamate and succinate from L-arginine: step 2/5. In terms of biological role, catalyzes the hydrolysis of N(2)-succinylarginine into N(2)-succinylornithine, ammonia and CO(2). The polypeptide is N-succinylarginine dihydrolase (Escherichia coli O9:H4 (strain HS)).